Here is a 280-residue protein sequence, read N- to C-terminus: 2-dehydro-3-deoxyphosphooctonate aldolase (280 aa).

Belongs to the KdsA family.

Its subcellular location is the cytoplasm. It catalyses the reaction D-arabinose 5-phosphate + phosphoenolpyruvate + H2O = 3-deoxy-alpha-D-manno-2-octulosonate-8-phosphate + phosphate. The protein operates within carbohydrate biosynthesis; 3-deoxy-D-manno-octulosonate biosynthesis; 3-deoxy-D-manno-octulosonate from D-ribulose 5-phosphate: step 2/3. It participates in bacterial outer membrane biogenesis; lipopolysaccharide biosynthesis. The chain is 2-dehydro-3-deoxyphosphooctonate aldolase from Thioalkalivibrio sulfidiphilus (strain HL-EbGR7).